The primary structure comprises 496 residues: Genome polyprotein (496 aa).

The Extracellular portion of the chain corresponds to 1 to 447 (SRCTHLENRD…HTVLGGAFNS (447 aa)). 6 cysteine pairs are disulfide-bonded: Cys3/Cys30, Cys60/Cys116, Cys60/Cys121, Cys74/Cys105, Cys92/Cys116, and Cys92/Cys121. A fusion peptide region spans residues 98 to 111 (DRGWGNHCGLFGKG). A glycan (N-linked (GlcNAc...) asparagine; by host) is linked at Asn154. 2 disulfide bridges follow: Cys186-Cys290 and Cys307-Cys338. The chain crosses the membrane as a helical span at residues 448-468 (IFGGVGFLPKLLMGVALAWLG). Residues 469–479 (LNTRNPTMSMS) are Cytoplasmic-facing. A helical transmembrane segment spans residues 480-496 (FLLAGGLVLAMTLGVGA).

In terms of assembly, homodimer; in the endoplasmic reticulum and Golgi. In terms of processing, N-glycosylated.

The protein resides in the virion membrane. It localises to the host endoplasmic reticulum membrane. In terms of biological role, binds to host cell surface receptor and mediates fusion between viral and cellular membranes. Envelope protein is synthesized in the endoplasmic reticulum in the form of heterodimer with protein prM. They play a role in virion budding in the ER, and the newly formed immature particle is covered with 60 spikes composed of heterodimer between precursor prM and envelope protein E. The virion is transported to the Golgi apparatus where the low pH causes dissociation of PrM-E heterodimers and formation of E homodimers. prM-E cleavage is ineficient, and many virions are only partially matured. These uncleaved prM would play a role in immune evasion. The chain is Genome polyprotein from Bos taurus (Bovine).